The following is a 339-amino-acid chain: Large ribosomal subunit protein uL29 (339 aa).

The segment at 1–96 (MNDLTKKSVE…FAKQRKAKIE (96 aa)) is large ribosomal subunit protein uL29. The segment at 97 to 339 (QMMAEQQAAE…KTTKKGTGKK (243 aa)) is unknown. Disordered stretches follow at residues 129–254 (VVST…VPTK) and 311–339 (KENRDKILTASKTTKKADDKTTKKGTGKK). Residues 145-156 (APVAAKKPAAAK) show a composition bias toward low complexity. Basic and acidic residues predominate over residues 157–170 (DFPKQKDVVEEKTA). The segment covering 171-182 (TGKPAAPSAKKA) has biased composition (low complexity). Residues 185-210 (AKKDVAQETKTDKDAALKALIKEKAA) are compositionally biased toward basic and acidic residues. Residues 217-238 (KSKTSTPSGKTTVTVKSVTSAK) are compositionally biased toward low complexity. The span at 239–248 (ADIEVPKETS) shows a compositional bias: basic and acidic residues.

It belongs to the universal ribosomal protein uL29 family. In terms of assembly, forms homomultimers. Part of the ribosome; radioactive IRS binds to purified ribosomes.

In terms of biological role, specifically binds a DNA inverted repeat sequence (IRS) found downstream of rpsB in one of the ribosomal subunit operons (for genes rpsB, tsf, and unknown gene x). Might be involved in regulation of transcription of the rpsB operon; the IRS may be a control element to attenuate transcription. This is Large ribosomal subunit protein uL29 from Spiroplasma citri.